Consider the following 694-residue polypeptide: DNA primase (694 aa).

The segment at 41–65 (CPFHDDKSPSFTVSPAKQFYYCFSC) adopts a CHC2-type zinc-finger fold. A Toprim domain is found at 265–348 (DQAVVVEGYF…QGQVQLRVLN (84 aa)). Residues E271, D317, and D319 each coordinate Mg(2+).

Belongs to the DnaG primase family. Monomer. Interacts with DnaB. The cofactor is Zn(2+). It depends on Mg(2+) as a cofactor.

It carries out the reaction ssDNA + n NTP = ssDNA/pppN(pN)n-1 hybrid + (n-1) diphosphate.. Functionally, RNA polymerase that catalyzes the synthesis of short RNA molecules used as primers for DNA polymerase during DNA replication. This Synechococcus elongatus (strain ATCC 33912 / PCC 7942 / FACHB-805) (Anacystis nidulans R2) protein is DNA primase.